A 313-amino-acid chain; its full sequence is MSGGLSHVPVLREEAVAMLAPRADGVYLDGTFGGGGYSASMLEAASCTVWAIDRDPAAIARGAALAARYPDRLHLIEGRFGDLLALLRDRGVTALDGAVFDFGVSSYQLDDPSRGFSFRTDGPLDMRMGAAGPTAADIVNGYAEAELADILFHFGEERASRRIAAAIVRRRAAQPFETTADLAAVIRTVVRPDRSGIDPATRSFQALRIEVNQELAEIERALEAAASLLAPGGRLVAVSFHSLEDRIVKRFMNAATGHVAAPSRHDPSGLARQAAAPRFRALTRGVVTPGEAETVANPRARSARLRGIERLAA.

S-adenosyl-L-methionine-binding positions include 35–37 (GGY), D53, F80, D101, and Q108.

It belongs to the methyltransferase superfamily. RsmH family.

Its subcellular location is the cytoplasm. It carries out the reaction cytidine(1402) in 16S rRNA + S-adenosyl-L-methionine = N(4)-methylcytidine(1402) in 16S rRNA + S-adenosyl-L-homocysteine + H(+). Specifically methylates the N4 position of cytidine in position 1402 (C1402) of 16S rRNA. In Acidiphilium cryptum (strain JF-5), this protein is Ribosomal RNA small subunit methyltransferase H.